The chain runs to 147 residues: UPF0178 protein CV_1768 (147 aa).

It belongs to the UPF0178 family.

The chain is UPF0178 protein CV_1768 from Chromobacterium violaceum (strain ATCC 12472 / DSM 30191 / JCM 1249 / CCUG 213 / NBRC 12614 / NCIMB 9131 / NCTC 9757 / MK).